Here is a 140-residue protein sequence, read N- to C-terminus: Ribosome-binding factor A (140 aa).

The segment at 121 to 140 (KAAEHGREDEELDDTEQDDK) is disordered. Acidic residues predominate over residues 129–140 (DEELDDTEQDDK).

It belongs to the RbfA family. In terms of assembly, monomer. Binds 30S ribosomal subunits, but not 50S ribosomal subunits or 70S ribosomes.

It localises to the cytoplasm. One of several proteins that assist in the late maturation steps of the functional core of the 30S ribosomal subunit. Associates with free 30S ribosomal subunits (but not with 30S subunits that are part of 70S ribosomes or polysomes). Required for efficient processing of 16S rRNA. May interact with the 5'-terminal helix region of 16S rRNA. This is Ribosome-binding factor A from Shewanella loihica (strain ATCC BAA-1088 / PV-4).